The primary structure comprises 920 residues: Plasma membrane ATPase (920 aa).

Residues 1 to 77 (MADHSASGAP…TPGGGRVVPE (77 aa)) are disordered. Residues 1–115 (MADHSASGAP…KEEKENHFLK (115 aa)) lie on the Cytoplasmic side of the membrane. Positions 38–51 (EDDEDEDIDALIED) are enriched in acidic residues. The helical transmembrane segment at 116 to 138 (FLGFFVGPIQFVMEGAAVLAAGL) threads the bilayer. The Extracellular portion of the chain corresponds to 139 to 140 (ED). A helical membrane pass occupies residues 141–160 (WVDFGVICGLLLLNAVVGFV). Residues 161-291 (QEFQAGSIVD…GSGHFTEVLN (131 aa)) are Cytoplasmic-facing. Residues 292–314 (GIGTILLILVIFTLLIVWVSSFY) traverse the membrane as a helical segment. The Extracellular segment spans residues 315 to 321 (RSNPIVQ). The chain crosses the membrane as a helical span at residues 322–354 (ILEFTLAITIIGVPVGLPAVVTTTMAVGAAYLA). Residues 355 to 687 (KKKAIVQKLS…LKTSRQIFHR (333 aa)) are Cytoplasmic-facing. Aspartate 378 functions as the 4-aspartylphosphate intermediate in the catalytic mechanism. Aspartate 634 and aspartate 638 together coordinate Mg(2+). A helical transmembrane segment spans residues 688-713 (MYAYVVYRIALSIHLEIFLGLWIAIL). Residues 714–720 (NRSLNIE) are Extracellular-facing. A helical transmembrane segment spans residues 721-738 (LVVFIAIFADVATLAIAY). Residues 739 to 754 (DNAPYSQTPVKWNLPK) lie on the Cytoplasmic side of the membrane. A helical transmembrane segment spans residues 755 to 779 (LWGMSVLLGVVLAVGTWITVTTMYA). At 780–806 (QGENGGIVQNFGNMDEVLFLQISLTEN) the chain is on the extracellular side. A run of 2 helical transmembrane segments spans residues 807 to 826 (WLIFITRANGPFWSSIPSWQ) and 827 to 847 (LSGAIFLVDILATCFTIWGWF). The Extracellular portion of the chain corresponds to 848–853 (EHSDTS). Residues 854–878 (IVAVVRIWIFSFGIFCIMGGVYYIL) traverse the membrane as a helical segment. Over 879–920 (QDSVGFDNLMHGKSPKGNQKQRSLEDFVVSLQRVSTQHEKSQ) the chain is Cytoplasmic.

It belongs to the cation transport ATPase (P-type) (TC 3.A.3) family. Type IIIA subfamily.

The protein localises to the cell membrane. The enzyme catalyses ATP + H2O + H(+)(in) = ADP + phosphate + 2 H(+)(out). Functionally, the plasma membrane ATPase of plants and fungi is a hydrogen ion pump. The proton gradient it generates drives the active transport of nutrients by H(+)-symport. The resulting external acidification and/or internal alkinization may mediate growth responses. The protein is Plasma membrane ATPase (pma-1) of Neurospora crassa (strain ATCC 24698 / 74-OR23-1A / CBS 708.71 / DSM 1257 / FGSC 987).